The chain runs to 314 residues: Hydroxyethylthiazole kinase (314 aa).

Residues 1–13 show a composition bias toward low complexity; the sequence is MSNSASSFADVSS. The tract at residues 1 to 24 is disordered; that stretch reads MSNSASSFADVSSGCTAGTPVPAD. Substrate is bound at residue Met70. ATP contacts are provided by Arg145 and Ser217. Residue Gly244 coordinates substrate.

It belongs to the Thz kinase family. It depends on Mg(2+) as a cofactor.

The catalysed reaction is 5-(2-hydroxyethyl)-4-methylthiazole + ATP = 4-methyl-5-(2-phosphooxyethyl)-thiazole + ADP + H(+). The protein operates within cofactor biosynthesis; thiamine diphosphate biosynthesis; 4-methyl-5-(2-phosphoethyl)-thiazole from 5-(2-hydroxyethyl)-4-methylthiazole: step 1/1. Its function is as follows. Catalyzes the phosphorylation of the hydroxyl group of 4-methyl-5-beta-hydroxyethylthiazole (THZ). This chain is Hydroxyethylthiazole kinase, found in Bifidobacterium longum subsp. infantis (strain ATCC 15697 / DSM 20088 / JCM 1222 / NCTC 11817 / S12).